We begin with the raw amino-acid sequence, 930 residues long: Isoleucine--tRNA ligase (930 aa).

The 'HIGH' region motif lies at 57-67 (PYANGNIHVGH). Position 554 (glutamate 554) interacts with L-isoleucyl-5'-AMP. The 'KMSKS' region motif lies at 595-599 (KMSKS). Lysine 598 contributes to the ATP binding site. Cysteine 888, cysteine 891, cysteine 908, and cysteine 911 together coordinate Zn(2+).

This sequence belongs to the class-I aminoacyl-tRNA synthetase family. IleS type 1 subfamily. As to quaternary structure, monomer. Requires Zn(2+) as cofactor.

It is found in the cytoplasm. The catalysed reaction is tRNA(Ile) + L-isoleucine + ATP = L-isoleucyl-tRNA(Ile) + AMP + diphosphate. In terms of biological role, catalyzes the attachment of isoleucine to tRNA(Ile). As IleRS can inadvertently accommodate and process structurally similar amino acids such as valine, to avoid such errors it has two additional distinct tRNA(Ile)-dependent editing activities. One activity is designated as 'pretransfer' editing and involves the hydrolysis of activated Val-AMP. The other activity is designated 'posttransfer' editing and involves deacylation of mischarged Val-tRNA(Ile). The polypeptide is Isoleucine--tRNA ligase (Streptococcus pneumoniae (strain Taiwan19F-14)).